We begin with the raw amino-acid sequence, 262 residues long: Malonyl-[acyl-carrier protein] O-methyltransferase (262 aa).

This sequence belongs to the methyltransferase superfamily.

It carries out the reaction malonyl-[ACP] + S-adenosyl-L-methionine = malonyl-[ACP] methyl ester + S-adenosyl-L-homocysteine. The protein operates within cofactor biosynthesis; biotin biosynthesis. Converts the free carboxyl group of a malonyl-thioester to its methyl ester by transfer of a methyl group from S-adenosyl-L-methionine (SAM). It allows to synthesize pimeloyl-ACP via the fatty acid synthetic pathway. This chain is Malonyl-[acyl-carrier protein] O-methyltransferase, found in Erwinia pyrifoliae (strain DSM 12163 / CIP 106111 / Ep16/96).